The following is a 207-amino-acid chain: Lipid A acyltransferase PagP (207 aa).

The signal sequence occupies residues 1–24 (MKFDLTTAYTLSIPLLASSGTVLA). Residues His-79, Asp-122, and Ser-123 contribute to the active site.

The protein belongs to the lipid A palmitoyltransferase family. In terms of assembly, homodimer.

The protein resides in the cell outer membrane. The enzyme catalyses a lipid A + a 1,2-diacyl-sn-glycero-3-phosphocholine = a hepta-acyl lipid A + a 2-acyl-sn-glycero-3-phosphocholine. The catalysed reaction is a lipid IVA + a 1,2-diacyl-sn-glycero-3-phosphocholine = a lipid IVB + a 2-acyl-sn-glycero-3-phosphocholine. It catalyses the reaction a lipid IIA + a 1,2-diacyl-sn-glycero-3-phosphocholine = a lipid IIB + a 2-acyl-sn-glycero-3-phosphocholine. Transfers a fatty acid residue from the sn-1 position of a phospholipid to the N-linked hydroxyfatty acid chain on the proximal unit of lipid A or its precursors. In Photorhabdus asymbiotica subsp. asymbiotica (strain ATCC 43949 / 3105-77) (Xenorhabdus luminescens (strain 2)), this protein is Lipid A acyltransferase PagP.